The sequence spans 775 residues: Meiotic driver SPOK2 (775 aa).

Residues 4-69 (KDRIAQLLRE…RCERERLQLE (66 aa)) are a coiled coil. Disordered stretches follow at residues 18–51 (KARE…REEE), 211–249 (QKDD…YICS), 442–525 (LSSA…AMAD), and 734–761 (PPPK…AQLF). Residues 444–457 (SAPSSQNTDISEYT) show a composition bias toward polar residues.

Its subcellular location is the cytoplasm. The protein localises to the nucleus. In terms of biological role, promotes unequal transmission of alleles from the parental zygote to progeny spores by acting as poison/antidote system, leading to poisoning of progeny that do not inherit the allele. May possess DNA nuclease activity that leads to spore killing, and a kinase activity that confers resistance to the nuclease activity. The polypeptide is Meiotic driver SPOK2 (Podospora anserina (strain S / ATCC MYA-4624 / DSM 980 / FGSC 10383) (Pleurage anserina)).